A 1537-amino-acid chain; its full sequence is DNA-directed RNA polymerase subunit beta' (1537 aa).

Zn(2+) contacts are provided by cysteine 57, cysteine 59, cysteine 72, and cysteine 75. 3 residues coordinate Mg(2+): aspartate 746, aspartate 748, and aspartate 750. Residues cysteine 1120, cysteine 1201, cysteine 1208, and cysteine 1211 each contribute to the Zn(2+) site. The interval 1502-1537 (LEKYGQTSVSTDAVTGSQRYDDTRPSSTSINPSYGD) is disordered. Polar residues-rich tracts occupy residues 1506–1519 (GQTS…TGSQ) and 1526–1537 (PSSTSINPSYGD).

Belongs to the RNA polymerase beta' chain family. As to quaternary structure, the RNAP catalytic core consists of 2 alpha, 1 beta, 1 beta' and 1 omega subunit. When a sigma factor is associated with the core the holoenzyme is formed, which can initiate transcription. Mg(2+) is required as a cofactor. The cofactor is Zn(2+).

It carries out the reaction RNA(n) + a ribonucleoside 5'-triphosphate = RNA(n+1) + diphosphate. Functionally, DNA-dependent RNA polymerase catalyzes the transcription of DNA into RNA using the four ribonucleoside triphosphates as substrates. The protein is DNA-directed RNA polymerase subunit beta' of Deinococcus geothermalis (strain DSM 11300 / CIP 105573 / AG-3a).